A 1027-amino-acid chain; its full sequence is LLGL scribble cell polarity complex component 2 (1027 aa).

10 WD repeats span residues 36–69 (SALG…FMGL), 76–117 (VLQI…EESF), 132–169 (VTEI…DRTI), 193–227 (ALQE…LSHF), 233–268 (LENA…NPEP), 282–324 (AITK…GQQT), 332–366 (VIDF…VIDL), 388–464 (TCSH…YKLS), 508–583 (QKIF…FVLV), and 592–653 (TSLA…LRQS). Position 653 is a phosphoserine (serine 653). Residues 654-669 (FRRMRRSRVSSHKRRP) show a composition bias toward basic residues. The tract at residues 654-678 (FRRMRRSRVSSHKRRPGGPTGEAQA) is disordered. WD repeat units follow at residues 715–771 (VRTL…KEIQ), 780–832 (GILV…VSAK), 837–890 (LTAL…VRYS), and 904–927 (VFTK…SLST). Residues 940–981 (TKAKKHNRPSNGNGTGLKMTSSGHVRNSKSQSDGDEKKPGPV) are disordered. A compositionally biased stretch (polar residues) spans 957-970 (KMTSSGHVRNSKSQ). 2 positions are modified to phosphoserine: serine 971 and serine 1022.

It belongs to the WD repeat L(2)GL family. Interacts with GPSM2/LGN, PRKCI/aPKC and PARD6B/Par-6. The complex is enhanced during mitosis. Interacts with DCAF1. Post-translationally, phosphorylated at Ser-653 by PRKCI. Phosphorylation is enhanced during cell polarization induced by calcium. Phosphorylation may occur during the cell-cell contact-induced cell polarization and may contribute to the segregation of LLGL2 from the PRKCI/aPKC and PARD6B/Par-6 complex.

It is found in the cytoplasm. Its function is as follows. Part of a complex with GPSM2/LGN, PRKCI/aPKC and PARD6B/Par-6, which may ensure the correct organization and orientation of bipolar spindles for normal cell division. This complex plays roles in the initial phase of the establishment of epithelial cell polarity. The sequence is that of LLGL scribble cell polarity complex component 2 (Llgl2) from Mus musculus (Mouse).